Reading from the N-terminus, the 122-residue chain is Small ribosomal subunit protein uS13 (122 aa).

The tract at residues 93 to 122 (RRGLPVRGQRTKTNARTRKGPKKTIAGKKK) is disordered.

This sequence belongs to the universal ribosomal protein uS13 family. Part of the 30S ribosomal subunit. Forms a loose heterodimer with protein S19. Forms two bridges to the 50S subunit in the 70S ribosome.

Functionally, located at the top of the head of the 30S subunit, it contacts several helices of the 16S rRNA. In the 70S ribosome it contacts the 23S rRNA (bridge B1a) and protein L5 of the 50S subunit (bridge B1b), connecting the 2 subunits; these bridges are implicated in subunit movement. Contacts the tRNAs in the A and P-sites. The sequence is that of Small ribosomal subunit protein uS13 from Corynebacterium efficiens (strain DSM 44549 / YS-314 / AJ 12310 / JCM 11189 / NBRC 100395).